A 2222-amino-acid chain; its full sequence is MMFGKKKNNGGSSTARYSAGNKYNTLSNNYALSAQQLLNASKIDDIDSMMGFERYVPPQYNGRFDAKDIDQIPGRVGWLTNMHATLVSQETLSSGSNGGGNSNDGERVTTNQGISGVDFYFLDEEGGSFKSTVVYDPYFFIACNDESRVNDVEELVKKYLESCLKSLQIIRKEDLTMDNHLLGLQKTLIKLSFVNSNQLFEARKLLRPILQDNANNNVQRNIYNVAANGSEKVDAKHLIEDIREYDVPYHVRVSIDKDIRVGKWYKVTQQGFIEDTRKIAFADPVVMAFDIETTKPPLKFPDSAVDQIMMISYMIDGEGFLITNREIISEDIEDFEYTPKPEYPGFFTIFNENDEVALLQRFFEHIRDVRPTVISTFNGDFFDWPFIHNRSKIHGLDMFDEIGFAPDAEGEYKSSYCSHMDCFRWVKRDSYLPQGSQGLKAVTQSKLGYNPIELDPELMTPYAFEKPQHLSEYSVSDAVATYYLYMKYVHPFIFSLCTIIPLNPDETLRKGTGTLCEMLLMVQAYQHNILLPNKHTDPIERFYDGHLLESETYVGGHVESLEAGVFRSDLKNEFKIDPSAIDELLQELPEALKFSVEVENKSSVDKVTNFEEIKNQITQKLLELKENNIRNELPLIYHVDVASMYPNIMTTNRLQPDSIKAERDCASCDFNRPGKTCARKLKWAWRGEFFPSKMDEYNMIKRALQNETFPNKNKFSKKKVLTFDELSYADQVIHIKKRLTEYSRKVYHRVKVSEIVEREAIVCQRENPFYVDTVKSFRDRRYEFKGLAKTWKGNLSKIDPSDKHARDEAKKMIVLYDSLQLAHKVILNSFYGYVMRKGSRWYSMEMAGITCLTGATIIQMARALVERVGRPLELDTDGIWCILPKSFPETYFFTLENGKKLYLSYPCSMLNYRVHQKFTNHQYQELKDPLNYIYETHSENTIFFEVDGPYKAMILPSSKEEGKGIKKRYAVFNEDGSLAELKGFELKRRGELQLIKNFQSDIFKVFLEGDTLEGCYSAVASVCNRWLDVLDSHGLMLEDEDLVSLICENRSMSKTLKEYEGQKSTSITTARRLGDFLGEDMVKDKGLQCKYIISSKPFNAPVTERAIPVAIFSADIPIKRSFLRRWTLDPSLEDLDIRTIIDWGYYRERLGSAIQKIITIPAALQGVSNPVPRVEHPDWLKRKIATKEDKFKQTSLTKFFSKTKNVPTMGKIKDIEDLFEPTVEEDNAKIKIARTTKKKAVSKRKRNQLTNEEDPLVLPSEIPSMDEDYVGWLNYQKIKWKIQARDRKRRDQLFGNTNSSRERSALGSMIRKQAESYANSTWEVLQYKDSGEPGVLEVFVTINGKVQNITFHIPKTIYMKFKSQTMPLQKIKNCLIEKSSASLPNNPKTSNPAGGQLFKITLPESVFLEEKENCTSIFNDENVLGVFEGTITPHQRAIMDLGASVTFRSKAMGALGKGIQQGFEMKDLSMAENERYLSGFSMDIGYLLHFPTSIGYEFFSLFKSWGDTITILVLKPSNQAQEINASSLGQIYKQMFEKKKGKIETYSYLVDIKEDINFEFVYFTDISKLYRRLSQETTKLKEERGLQFLLLLQSPFITKLLGTIRLLNQMPIVKLSLNEVLLPQLNWQPTLLKKLVNHVLSSGSWISHLIKLSQYSNIPICNLRLDSMDYIIDVLYARKLKKENIVLWWNEKAPLPDHGGIQNDFDLNTSWIMNDSEFPKINNSGVYDNVVLDVGVDNLTVNTILTSALINDAEGSDLVNNNMGIDDKDAVINSPSEFVHDAFSNDALNVLRGMLKEWWDEALKENSTADLLVNSLASWVQNPNAKLFDGLLRYHVHNLTKKALLQLVNEFSALGSTIVYADRNQILIKTNKYSPENCYAYSQYMMKAVRTNPMFSYLDLNIKRYWDLLIWMDKFNFSGLACIEIEEKENQDYTAVSQWQLKKFLSPIYQPEFEDWMMIILDSMLKTKQSYLKLNSGTQRPTQIVNVKKQDKEDSVENSLNGFSHLFSKPLMKRVKKLFKNQQEFILDPQYEADYVIPVLPGSHLNVKNPLLELVKSLCHVMLLSKSTILEIRTLRKELLKIFELREFAKVAEFKDPSLSLVVPDFLCEYCFFISDIDFCKAAPESIFSCVRCHKAFNQVLLQEHLIQKLRSDIESYLIQDLRCSRCHKVKRDYMSAHCPCAGAWEGTLPRESIVQKLNVFKQVAKYYGFDILLSCIADLTI.

The tract at residues 90-110 (ETLSSGSNGGGNSNDGERVTT) is disordered. Zn(2+) is bound by residues cysteine 2108, cysteine 2111, cysteine 2130, and cysteine 2133. The segment at 2108-2133 (CEYCFFISDIDFCKAAPESIFSCVRC) adopts a CysA-type zinc-finger fold. 4 residues coordinate [4Fe-4S] cluster: cysteine 2164, cysteine 2167, cysteine 2179, and cysteine 2181. The short motif at 2164 to 2181 (CSRCHKVKRDYMSAHCPC) is the CysB motif element.

The protein belongs to the DNA polymerase type-B family. As to quaternary structure, DNA polymerase epsilon is a heterotetramer consisting of POL2, DPB2, DPB3 and DPB4. [4Fe-4S] cluster is required as a cofactor.

The protein resides in the nucleus. The enzyme catalyses DNA(n) + a 2'-deoxyribonucleoside 5'-triphosphate = DNA(n+1) + diphosphate. Its function is as follows. Catalytic component of the DNA polymerase epsilon complex which participates in chromosomal DNA replication. Required during synthesis of the leading DNA strands at the replication fork, binds at/or near replication origins and moves along DNA with the replication fork. Has 3'-5' proofreading exonuclease activity that corrects errors arising during DNA replication. In Saccharomyces cerevisiae (strain ATCC 204508 / S288c) (Baker's yeast), this protein is DNA polymerase epsilon catalytic subunit A (POL2).